The following is a 191-amino-acid chain: Threonylcarbamoyl-AMP synthase (191 aa).

The YrdC-like domain occupies 10–191; that stretch reads PFRVRHAAAE…DGRSGAYLRR (182 aa).

This sequence belongs to the SUA5 family. TsaC subfamily.

The protein localises to the cytoplasm. It carries out the reaction L-threonine + hydrogencarbonate + ATP = L-threonylcarbamoyladenylate + diphosphate + H2O. In terms of biological role, required for the formation of a threonylcarbamoyl group on adenosine at position 37 (t(6)A37) in tRNAs that read codons beginning with adenine. Catalyzes the conversion of L-threonine, HCO(3)(-)/CO(2) and ATP to give threonylcarbamoyl-AMP (TC-AMP) as the acyladenylate intermediate, with the release of diphosphate. This is Threonylcarbamoyl-AMP synthase from Halorhodospira halophila (strain DSM 244 / SL1) (Ectothiorhodospira halophila (strain DSM 244 / SL1)).